The chain runs to 236 residues: Thiamine-phosphate synthase (236 aa).

4-amino-2-methyl-5-(diphosphooxymethyl)pyrimidine is bound by residues 57–61 (QLRDK) and Asn89. Mg(2+)-binding residues include Asp90 and Asp109. Ser128 lines the 4-amino-2-methyl-5-(diphosphooxymethyl)pyrimidine pocket. 154–156 (TPS) is a 2-[(2R,5Z)-2-carboxy-4-methylthiazol-5(2H)-ylidene]ethyl phosphate binding site. 4-amino-2-methyl-5-(diphosphooxymethyl)pyrimidine is bound at residue Lys157. 2-[(2R,5Z)-2-carboxy-4-methylthiazol-5(2H)-ylidene]ethyl phosphate is bound by residues Gly185 and 205–206 (IS).

Belongs to the thiamine-phosphate synthase family. Mg(2+) serves as cofactor.

The catalysed reaction is 2-[(2R,5Z)-2-carboxy-4-methylthiazol-5(2H)-ylidene]ethyl phosphate + 4-amino-2-methyl-5-(diphosphooxymethyl)pyrimidine + 2 H(+) = thiamine phosphate + CO2 + diphosphate. The enzyme catalyses 2-(2-carboxy-4-methylthiazol-5-yl)ethyl phosphate + 4-amino-2-methyl-5-(diphosphooxymethyl)pyrimidine + 2 H(+) = thiamine phosphate + CO2 + diphosphate. It carries out the reaction 4-methyl-5-(2-phosphooxyethyl)-thiazole + 4-amino-2-methyl-5-(diphosphooxymethyl)pyrimidine + H(+) = thiamine phosphate + diphosphate. The protein operates within cofactor biosynthesis; thiamine diphosphate biosynthesis; thiamine phosphate from 4-amino-2-methyl-5-diphosphomethylpyrimidine and 4-methyl-5-(2-phosphoethyl)-thiazole: step 1/1. Condenses 4-methyl-5-(beta-hydroxyethyl)thiazole monophosphate (THZ-P) and 2-methyl-4-amino-5-hydroxymethyl pyrimidine pyrophosphate (HMP-PP) to form thiamine monophosphate (TMP). The protein is Thiamine-phosphate synthase of Roseiflexus sp. (strain RS-1).